A 124-amino-acid polypeptide reads, in one-letter code: Quinol oxidase subunit 4 (124 aa).

3 consecutive transmembrane segments (helical) span residues 16–36 (IVGF…AVYT), 44–64 (LWII…MFMH), and 78–98 (TLFG…IFAA).

This sequence belongs to the cytochrome c oxidase bacterial subunit 4 family.

Its subcellular location is the cell membrane. The catalysed reaction is 2 a quinol + O2 = 2 a quinone + 2 H2O. Catalyzes quinol oxidation with the concomitant reduction of oxygen to water. Major component for energy conversion during vegetative growth. The protein is Quinol oxidase subunit 4 (qoxD) of Bacillus spizizenii (strain ATCC 23059 / NRRL B-14472 / W23) (Bacillus subtilis subsp. spizizenii).